Here is a 156-residue protein sequence, read N- to C-terminus: Small ribosomal subunit protein uS7 (156 aa).

This sequence belongs to the universal ribosomal protein uS7 family. Part of the 30S ribosomal subunit. Contacts proteins S9 and S11.

Its function is as follows. One of the primary rRNA binding proteins, it binds directly to 16S rRNA where it nucleates assembly of the head domain of the 30S subunit. Is located at the subunit interface close to the decoding center, probably blocks exit of the E-site tRNA. This is Small ribosomal subunit protein uS7 from Synechococcus sp. (strain JA-3-3Ab) (Cyanobacteria bacterium Yellowstone A-Prime).